We begin with the raw amino-acid sequence, 687 residues long: uncharacterized protein (687 aa).

Positions 277-295 are enriched in low complexity; it reads SVCSSQSFSSGQSDISMSS. Disordered stretches follow at residues 277–337, 342–361, and 531–564; these read SVCS…QDCD, DTESVANEPEPYSSTMSEMP, and HVEQAGGDYSSSGQKDQKKKRGKRPVSNPPPSLI. A compositionally biased stretch (polar residues) spans 300–313; it reads NGSSVGNGSLSPMT.

This is an uncharacterized protein from Caenorhabditis elegans.